Consider the following 582-residue polypeptide: Pineapple eye protein (582 aa).

Residues 6 to 44 form a C2HC pre-PHD-type zinc finger; it reads ELQCLICKYSDTDDLVFGEWMIVRNLQVHYFCLLLSTHL. The extended PHD domain (ePHD) stretch occupies residues 6–119; the sequence is ELQCLICKYS…QYKSYCYKCR (114 aa). Residues 72 to 119 form a PHD-type; atypical zinc finger; it reads RKCWYCNKIGASLQCDRCRSLFHLKCGLENRAVFEFCGQYKSYCYKCR. Disordered regions lie at residues 292-311 and 323-422; these read PART…DGSF and RSLT…ASEI. The span at 340–363 shows a compositional bias: polar residues; sequence SSNITVIFSQPKSNATSERLSLSP. A compositionally biased stretch (basic and acidic residues) spans 383–399; sequence SIDENHSPQPIARRDTS.

In terms of biological role, required for survival of imaginal disk cells possibly by regulation of cell apoptosis. Required for germline stem cell self-renewal through mediation of BMP signaling. In Drosophila melanogaster (Fruit fly), this protein is Pineapple eye protein.